Consider the following 262-residue polypeptide: Zinc import ATP-binding protein ZnuC (262 aa).

One can recognise an ABC transporter domain in the interval 4 to 220 (LNLSGVRLSH…PEYLALFGPR (217 aa)). 36 to 43 (GPNGAGKS) is an ATP binding site. The interval 238 to 262 (ADGSVLPLAEGGGEPHTHGPGCRHG) is disordered.

Belongs to the ABC transporter superfamily. Zinc importer (TC 3.A.1.15.5) family. In terms of assembly, the complex is composed of two ATP-binding proteins (ZnuC), two transmembrane proteins (ZnuB) and a solute-binding protein (ZnuA).

The protein resides in the cell inner membrane. It catalyses the reaction Zn(2+)(out) + ATP(in) + H2O(in) = Zn(2+)(in) + ADP(in) + phosphate(in) + H(+)(in). Its function is as follows. Part of the ABC transporter complex ZnuABC involved in zinc import. Responsible for energy coupling to the transport system. This chain is Zinc import ATP-binding protein ZnuC, found in Paramagnetospirillum magneticum (strain ATCC 700264 / AMB-1) (Magnetospirillum magneticum).